We begin with the raw amino-acid sequence, 260 residues long: Troponin I 3 (260 aa).

The segment covering 192–219 (DLDEIMAKKKGTADGKPEWSKKEKKEEE) has biased composition (basic and acidic residues). Residues 192-260 (DLDEIMAKKK…EEEEEEEEEE (69 aa)) are disordered. Residues 231 to 260 (PEAEPEPEAAEPAAEEPEAEEEEEEEEEEE) are compositionally biased toward acidic residues.

The protein belongs to the troponin I family. As to expression, expressed in body wall muscle from first larval stage to adult. In adults expression is predominantly in vulval and anal muscles, body wall muscle expression is weaker. Also expressed in vulval muscles of hermaphrodites and the sex muscles of males.

Functionally, troponin I is the inhibitory subunit of troponin, the thin filament regulatory complex which confers calcium-sensitivity to muscle actomyosin ATPase activity. The protein is Troponin I 3 (tni-3) of Caenorhabditis elegans.